Consider the following 217-residue polypeptide: Small ribosomal subunit protein uS3c (217 aa).

Residues 39–109 enclose the KH type-2 domain; sequence IRNFLRTKLI…RFRITITYIP (71 aa).

The protein belongs to the universal ribosomal protein uS3 family. As to quaternary structure, part of the 30S ribosomal subunit.

Its subcellular location is the plastid. It is found in the chloroplast. In Chlorokybus atmophyticus (Soil alga), this protein is Small ribosomal subunit protein uS3c (rps3).